Here is a 601-residue protein sequence, read N- to C-terminus: Elongation factor 4 (601 aa).

A tr-type G domain is found at 7-189 (RNIRNFSIIA…AIVHRIPPPA (183 aa)). Residues 19 to 24 (DHGKST) and 136 to 139 (NKID) contribute to the GTP site.

This sequence belongs to the TRAFAC class translation factor GTPase superfamily. Classic translation factor GTPase family. LepA subfamily.

Its subcellular location is the cell inner membrane. The enzyme catalyses GTP + H2O = GDP + phosphate + H(+). Functionally, required for accurate and efficient protein synthesis under certain stress conditions. May act as a fidelity factor of the translation reaction, by catalyzing a one-codon backward translocation of tRNAs on improperly translocated ribosomes. Back-translocation proceeds from a post-translocation (POST) complex to a pre-translocation (PRE) complex, thus giving elongation factor G a second chance to translocate the tRNAs correctly. Binds to ribosomes in a GTP-dependent manner. This chain is Elongation factor 4, found in Xanthomonas oryzae pv. oryzae (strain MAFF 311018).